Here is an 872-residue protein sequence, read N- to C-terminus: Sine oculis-binding protein homolog (872 aa).

Positions 1-14 (MAEMEKEGRPPENK) are enriched in basic and acidic residues. The segment at 1–26 (MAEMEKEGRPPENKRSRKPAHPVKRE) is disordered. 2 FCS-type zinc fingers span residues 142-180 (DDVSNVQIMCAWCQKVGIKRYSLSMGSEVKSFCSEKCFA) and 216-256 (FKNN…KCLN). 3 disordered regions span residues 308-354 (RRKA…KSMP), 411-484 (FIRG…PGAP), and 550-619 (KPPN…GRSE). The segment covering 319-344 (GQSQGPGPSASTTVSPSDTANCSVTK) has biased composition (polar residues). The segment covering 417 to 433 (HHASNPNSPLSNPMLPG) has biased composition (low complexity). Over residues 460–484 (IHPPSTPTMPGNPPGLLPPPPPGAP) the composition is skewed to pro residues. The SUMO interaction motif 1 (SIM); mediates the binding to polysumoylated substrates motif lies at 620–624 (VVDLT). Position 629 is a phosphoserine (S629). The SUMO interaction motif 2 (SIM); mediates the binding to polysumoylated substrates signature appears at 651–655 (VIDLT). K675 is covalently cross-linked (Glycyl lysine isopeptide (Lys-Gly) (interchain with G-Cter in SUMO2)). Phosphoserine is present on S697. Residues 728 to 770 (AAEGAKGAEPPPEQPPPPPPPPPAPPKKLLSPEEPAVSELESV) are disordered. Over residues 736 to 753 (EPPPEQPPPPPPPPPAPP) the composition is skewed to pro residues.

The protein belongs to the SOBP family. In terms of assembly, interacts (via SIM domains) with SUMO1 and SUMO2.

Functionally, implicated in development of the cochlea. The sequence is that of Sine oculis-binding protein homolog from Bos taurus (Bovine).